Consider the following 295-residue polypeptide: Indole-3-glycerol phosphate synthase (295 aa).

The protein belongs to the TrpC family.

The catalysed reaction is 1-(2-carboxyphenylamino)-1-deoxy-D-ribulose 5-phosphate + H(+) = (1S,2R)-1-C-(indol-3-yl)glycerol 3-phosphate + CO2 + H2O. It functions in the pathway amino-acid biosynthesis; L-tryptophan biosynthesis; L-tryptophan from chorismate: step 4/5. The polypeptide is Indole-3-glycerol phosphate synthase (Prochlorococcus marinus subsp. pastoris (strain CCMP1986 / NIES-2087 / MED4)).